The chain runs to 206 residues: CMP-5'-(N-acetyl-N-hydroxy-3-aminopropyl)phosphonate hydrolase (206 aa).

A Nudix hydrolase domain is found at 37 to 166 (VRAPGAAIIV…RTVTSGTAIG (130 aa)). Residues 74 to 95 (GLVDDREDPAVTAAREAEEETG) carry the Nudix box motif. Low complexity predominate over residues 177–194 (RQQPGGVQEQPGGAQQQG). A disordered region spans residues 177–206 (RQQPGGVQEQPGGAQQQGMNESHSGRTVRG).

Belongs to the Nudix hydrolase family. The cofactor is Mg(2+).

The catalysed reaction is CMP-5'-(N-acetyl-N-hydroxy-3-aminopropyl)phosphonate + H2O = 3-(N-acetyl-N-hydroxy)aminopropylphosphonate + CMP + H(+). The protein operates within antibiotic biosynthesis. In terms of biological role, nucleotide hydrolase involved in the biosynthesis of the phosphonate antibiotic FR-900098, a potent antimalarial agent that acts as an inhibitor of 1-deoxy-D-xylulose 5-phosphate reductoisomerase (DXR), the first enzyme in the nonmevalonate pathway for isoprenoid biosynthesis. Catalyzes the hydrolysis of CMP-5'-(N-acetyl-N-hydroxy-3-aminopropyl)phosphonate (CMP-5'-FR-900098) to produce CMP and the final compound FR-900098. In vitro, has broad substrate specificity and also catalyzes the hydrolysis of all the other CMP-containing intermediates within the pathway and shows low activity toward CTP. The protein is CMP-5'-(N-acetyl-N-hydroxy-3-aminopropyl)phosphonate hydrolase of Streptomyces rubellomurinus (strain ATCC 31215).